The sequence spans 919 residues: Calcium-activated chloride channel regulator 4 (919 aa).

An N-terminal signal peptide occupies residues 1 to 21 (MGLFRGFVFLLVLCLLHQSNT). The interval 45–199 (DEKIIEQIED…GISGRNRVYK (155 aa)) is metalloprotease domain. Asn-75 carries N-linked (GlcNAc...) asparagine glycosylation. His-155 provides a ligand contact to Zn(2+). Residue Glu-156 is part of the active site. Residues His-159 and Asp-166 each contribute to the Zn(2+) site. The VWFA domain occupies 306 to 476 (IVCLVLDKSG…NGLIDAFGAL (171 aa)). N-linked (GlcNAc...) asparagine glycans are attached at residues Asn-340, Asn-504, Asn-542, Asn-588, Asn-628, Asn-811, Asn-832, Asn-837, and Asn-852. The segment at 870-893 (ANPDDIDPTPTPTPTPTPDKSHNS) is disordered. A helical membrane pass occupies residues 895 to 915 (VNISTLVLSVIGSVVIVNFIL).

This sequence belongs to the CLCR family. The translation product is autoproteolytically cleaved by the metalloprotease domain in the endoplasmic reticulum into a N-terminal and a C-terminal products that remain physically associated with each other. The cleavage is necessary for calcium-activated chloride channel (CaCC) activation activity. As to expression, primarily expressed in the digestive tract, mainly in colon. Detected in smaller amounts in brain, urogenital organs, testis, and salivary and mammary glands. Highly expressed in the epithelial layer and submucosal gland of the inferior turbinate mucosa. Lower levels in the epithelial layer of nasal polyp.

It localises to the cell membrane. It is found in the apical cell membrane. The protein localises to the secreted. Functionally, may be involved in mediating calcium-activated chloride conductance. In Homo sapiens (Human), this protein is Calcium-activated chloride channel regulator 4 (CLCA4).